A 162-amino-acid chain; its full sequence is Phosphopantetheine adenylyltransferase (162 aa).

S9 lines the substrate pocket. ATP contacts are provided by residues 9–10 and H17; that span reads SF. Substrate contacts are provided by K41, V77, and K91. Residues 92-94, E102, and 126-132 each bind ATP; these read GLR and YAFLSSS.

The protein belongs to the bacterial CoaD family. As to quaternary structure, homohexamer. Mg(2+) serves as cofactor.

The protein localises to the cytoplasm. The catalysed reaction is (R)-4'-phosphopantetheine + ATP + H(+) = 3'-dephospho-CoA + diphosphate. It participates in cofactor biosynthesis; coenzyme A biosynthesis; CoA from (R)-pantothenate: step 4/5. Its function is as follows. Reversibly transfers an adenylyl group from ATP to 4'-phosphopantetheine, yielding dephospho-CoA (dPCoA) and pyrophosphate. This is Phosphopantetheine adenylyltransferase from Frankia alni (strain DSM 45986 / CECT 9034 / ACN14a).